Here is a 727-residue protein sequence, read N- to C-terminus: Engulfment and cell motility protein 1 (727 aa).

Y18 is subject to Phosphotyrosine; by HCK. An N6-acetyllysine mark is found at K100 and K105. Y216 carries the post-translational modification Phosphotyrosine; by HCK. The region spanning 319–492 (AQRDIIFELR…VVKEQVMRAL (174 aa)) is the ELMO domain. Phosphoserine is present on S344. Y395 and Y511 each carry phosphotyrosine; by HCK. One can recognise a PH domain in the interval 555 to 676 (RLVEGTCFRK…DGLNALLGKD (122 aa)). The SH3-binding motif lies at 707–714 (PDAPPPIP). The residue at position 720 (Y720) is a Phosphotyrosine; by HCK.

In terms of assembly, interacts directly with the SH3-domain of DOCK1 via its SH3-binding site. Probably forms a heterotrimeric complex with DOCK1 and RAC1. Interacts with PLEKHG6. Interacts with HCK (via SH3 domain). Interacts with ADGRB1. Interacts with ADGRB3. Interacts with DOCK5. Phosphorylated by HCK.

It localises to the cytoplasm. Its subcellular location is the cell membrane. Functionally, involved in cytoskeletal rearrangements required for phagocytosis of apoptotic cells and cell motility. Acts in association with DOCK1 and CRK. Was initially proposed to be required in complex with DOCK1 to activate Rac Rho small GTPases. May enhance the guanine nucleotide exchange factor (GEF) activity of DOCK1. The sequence is that of Engulfment and cell motility protein 1 (Elmo1) from Mus musculus (Mouse).